Reading from the N-terminus, the 463-residue chain is L-seryl-tRNA(Sec) selenium transferase (463 aa).

Lysine 295 carries the N6-(pyridoxal phosphate)lysine modification.

This sequence belongs to the SelA family. In terms of assembly, homodecamer; pentamer of dimers. Binds only one seryl-tRNA(Sec) per dimer. Pyridoxal 5'-phosphate serves as cofactor.

It is found in the cytoplasm. It catalyses the reaction L-seryl-tRNA(Sec) + selenophosphate + H(+) = L-selenocysteinyl-tRNA(Sec) + phosphate. It functions in the pathway aminoacyl-tRNA biosynthesis; selenocysteinyl-tRNA(Sec) biosynthesis; selenocysteinyl-tRNA(Sec) from L-seryl-tRNA(Sec) (bacterial route): step 1/1. Its function is as follows. Converts seryl-tRNA(Sec) to selenocysteinyl-tRNA(Sec) required for selenoprotein biosynthesis. The protein is L-seryl-tRNA(Sec) selenium transferase of Serratia proteamaculans (strain 568).